The primary structure comprises 101 residues: Large ribosomal subunit protein eL36 (101 aa).

2 disordered regions span residues 1-31 (MGEIAVGLNKGHQVTKKAGTPRPSRRKGFLS) and 75-101 (GTHMRGKKKREEMAGVLRKMQAASKGE).

The protein belongs to the eukaryotic ribosomal protein eL36 family.

The polypeptide is Large ribosomal subunit protein eL36 (RL36) (Ulva compressa (Green alga)).